The sequence spans 435 residues: MKATAERIEKNTVLLEIEVEQERVDQALNQAYKKVVKQVNVPGFRKGKAPRKMVERFVGTETLFGEAVEIIIPDAYMEALKETATEPIDQPKIDIVQGEAGKALIFKATVEVKPEVTLGEYKGLEVTKASSEVTDEDVEKELARLQDRHAKLVTLEEGEIKKDDITLIDFTGYVDGEAFEGGHAENYSLTVGSGTFIPGFEEQLLGVKLGEEKEVNVTFPEEYHAENLAGKPATFKVKINEIKRKELASLDDEFAKDVSEFDTLDELKSDIRKKLMEVAERTAKSSVENGAVEAAVEKATVEIPQAMISQKVEEMLNSMGQRLAQQGINLDQYFQYTNTSMDDMRQRMRPDAEKNVKNELVLDAIAKVENITATAEETNEEIQKIAEYVKQDAEIVRKTLELQGELGHINQDIARRKVVQFLVENAKVVEGTKED.

The region spanning 163–248 (DDITLIDFTG…INEIKRKELA (86 aa)) is the PPIase FKBP-type domain.

It belongs to the FKBP-type PPIase family. Tig subfamily.

The protein localises to the cytoplasm. The enzyme catalyses [protein]-peptidylproline (omega=180) = [protein]-peptidylproline (omega=0). Functionally, involved in protein export. Acts as a chaperone by maintaining the newly synthesized protein in an open conformation. Functions as a peptidyl-prolyl cis-trans isomerase. This Desulforamulus reducens (strain ATCC BAA-1160 / DSM 100696 / MI-1) (Desulfotomaculum reducens) protein is Trigger factor.